Consider the following 160-residue polypeptide: uncharacterized protein (160 aa).

Residues Tyr137 to Val157 form a helical membrane-spanning segment.

It is found in the host membrane. The protein localises to the virion. This is an uncharacterized protein from Acanthamoeba polyphaga mimivirus (APMV).